The sequence spans 185 residues: MISSNDFRPGVSIELEGSIWKVVEFLHVKPGKGSAFVRTTLKNVQTGKVLERTFRAGETVPQATIEKRTMQHTYKEGEQFVFMDMETYEEARLNPEQLGDGAKYIKENMEVNVLYWGEQVLNIELPTSVILEVTDTDPGVKGDTATGGSKPAIVETGAQIMVPLFISIGERIKVDTRDGSYLGRE.

The protein belongs to the elongation factor P family.

It is found in the cytoplasm. It functions in the pathway protein biosynthesis; polypeptide chain elongation. Involved in peptide bond synthesis. Stimulates efficient translation and peptide-bond synthesis on native or reconstituted 70S ribosomes in vitro. Probably functions indirectly by altering the affinity of the ribosome for aminoacyl-tRNA, thus increasing their reactivity as acceptors for peptidyl transferase. In Gloeothece citriformis (strain PCC 7424) (Cyanothece sp. (strain PCC 7424)), this protein is Elongation factor P.